Reading from the N-terminus, the 286-residue chain is MMRVGAITLDGKATRDEIFVDLRERVARLAAAGRTPGLATVLVGDDPGSHAYVRGKHADCAKVGINSIRRDLPADISQAVLDETIDELNANPECTGYIVQLPLPKHLNENAALERIDPSKDADGLHPTNLGRLVLNEPAPLPCTPRGIVHLLRRFEVEIAGAHVAVLGRGVTVGRPLGLLLTRRSENATVTLCHTATRHLPEITREADIIVAAAGVPHMVTADMVRPGAAVVDVGVSRDDAGKLVGDVHPGVWDVAGHVSPNPGGVGPLTRAFLLTNVVERAEANL.

NADP(+)-binding positions include 168 to 170, Thr-195, and Val-236; that span reads GRG.

It belongs to the tetrahydrofolate dehydrogenase/cyclohydrolase family. In terms of assembly, homodimer.

It catalyses the reaction (6R)-5,10-methylene-5,6,7,8-tetrahydrofolate + NADP(+) = (6R)-5,10-methenyltetrahydrofolate + NADPH. The catalysed reaction is (6R)-5,10-methenyltetrahydrofolate + H2O = (6R)-10-formyltetrahydrofolate + H(+). It participates in one-carbon metabolism; tetrahydrofolate interconversion. Catalyzes the oxidation of 5,10-methylenetetrahydrofolate to 5,10-methenyltetrahydrofolate and then the hydrolysis of 5,10-methenyltetrahydrofolate to 10-formyltetrahydrofolate. The polypeptide is Bifunctional protein FolD (Mycolicibacterium gilvum (strain PYR-GCK) (Mycobacterium gilvum (strain PYR-GCK))).